Reading from the N-terminus, the 73-residue chain is MAAEPKAAVEVVKVDLFEDDDEFEEFEINEDWLEKEEVKEVSLQWEDDWDDDDVSDDFSRQLKKELENASEKK.

The protein belongs to the DSS1/SEM1 family. As to quaternary structure, part of the 26S proteasome. Interacts with BRCA2B. Interacts with EER5. Interacts with UCH1 and UCH2.

Functionally, subunit of the 26S proteasome which plays a role in ubiquitin-dependent proteolysis. Also associates with the TREX-2 complex that is required for transcription-coupled mRNA export. In Arabidopsis thaliana (Mouse-ear cress), this protein is Protein DSS1 HOMOLOG ON CHROMOSOME V.